The sequence spans 97 residues: Small integral membrane protein 8 (97 aa).

Low complexity predominate over residues 1–14 (MSSPSSESSNAKSS). The disordered stretch occupies residues 1–26 (MSSPSSESSNAKSSPPKEEYRTPGLR). Residues 49 to 69 (VMVFGIVTITMCVAYIAYLHA) form a helical membrane-spanning segment.

It belongs to the SMIM8 family.

It is found in the membrane. The sequence is that of Small integral membrane protein 8 (smim8) from Xenopus tropicalis (Western clawed frog).